The chain runs to 531 residues: DNA damage-binding protein cmr1 (531 aa).

2 disordered regions span residues 37 to 83 (GIFP…RGIA) and 218 to 264 (DASQ…MHIH). A compositionally biased stretch (basic residues) spans 53–64 (KPKKKPAPKKIK). The stretch at 186–227 (VTPERIYTMTFHPSEAKPLIFAGDKMGNLGVLDASQERPVSS) is one WD 1 repeat. Over residues 233–245 (GDEEEQEDDDDPD) the composition is skewed to acidic residues. WD repeat units lie at residues 253–293 (PHTR…SVET), 300–340 (SDDV…RTAV), 345–385 (LSEK…HDDP), 392–431 (LSRL…ASWE), 454–497 (GRWV…LAQL), and 500–531 (DGIT…CLWM).

It belongs to the WD repeat DDB2/WDR76 family.

Its function is as follows. DNA-binding protein that binds to both single- and double-stranded DNA. Binds preferentially to UV-damaged DNA. May be involved in DNA-metabolic processes. The chain is DNA damage-binding protein cmr1 from Aspergillus clavatus (strain ATCC 1007 / CBS 513.65 / DSM 816 / NCTC 3887 / NRRL 1 / QM 1276 / 107).